Here is a 424-residue protein sequence, read N- to C-terminus: Histidine--tRNA ligase (424 aa).

This sequence belongs to the class-II aminoacyl-tRNA synthetase family. In terms of assembly, homodimer.

Its subcellular location is the cytoplasm. The catalysed reaction is tRNA(His) + L-histidine + ATP = L-histidyl-tRNA(His) + AMP + diphosphate + H(+). In Escherichia coli (strain 55989 / EAEC), this protein is Histidine--tRNA ligase.